The following is a 31-amino-acid chain: Conotoxin pc6b (31 aa).

Cystine bridges form between cysteine 2/cysteine 20, cysteine 9/cysteine 25, and cysteine 19/cysteine 29.

Belongs to the conotoxin O1 superfamily. In terms of tissue distribution, expressed by the venom duct.

The protein localises to the secreted. The polypeptide is Conotoxin pc6b (Conus pictus (Cone snail)).